Reading from the N-terminus, the 151-residue chain is MASMQKRLQKELLALQNDPPPGMTLNEKSVQNSITQWIVDMEGAPGTLYEGEKFQLLFKFSSRYPFDSPQVMFTGENIPVHPHVYSNGHICLSILTEDWSPALSVQSVCLSIISMLSSCKEKRRPPDNSFYVRTCNKNPKKTKWWYHDDTC.

Met-1 is covalently cross-linked (Peptide (Met-Gly) (interchain with G-Cter in ubiquitin)). A UBC core domain is found at 3–151 (SMQKRLQKEL…TKWWYHDDTC (149 aa)). Catalysis depends on Cys-91, which acts as the Glycyl thioester intermediate.

This sequence belongs to the ubiquitin-conjugating enzyme family. Homodimer. Interacts with FANCL. Interacts with STUB1/CHIP. In terms of processing, ubiquitinated in vitro in the presence of FANCL. Autoubiquitinated at Met-1.

It localises to the nucleus. It carries out the reaction S-ubiquitinyl-[E1 ubiquitin-activating enzyme]-L-cysteine + [E2 ubiquitin-conjugating enzyme]-L-cysteine = [E1 ubiquitin-activating enzyme]-L-cysteine + S-ubiquitinyl-[E2 ubiquitin-conjugating enzyme]-L-cysteine.. It catalyses the reaction S-ubiquitinyl-[E1 ubiquitin-activating enzyme]-L-cysteine + [acceptor protein]-N-terminal-amino acid = [E1 ubiquitin-activating enzyme]-L-cysteine + N-terminal-ubiquitinyl-[acceptor protein].. It functions in the pathway protein modification; protein ubiquitination. Accepts ubiquitin from the E1 complex and catalyzes its covalent attachment to other proteins. Specifically monoubiquitinates the N-terminus of various substrates, including ATXN3, MAPT/TAU, POLR2H/RPB8 and STUB1/CHIP, by recognizing backbone atoms of disordered N-termini. Involved in degradation of misfolded chaperone substrates by mediating monoubiquitination of STUB1/CHIP, leading to recruitment of ATXN3 to monoubiquitinated STUB1/CHIP, and restriction of the length of ubiquitin chain attached to STUB1/CHIP substrates by ATXN3. After UV irradiation, but not after mitomycin-C (MMC) treatment, acts as a specific E2 ubiquitin-conjugating enzyme for the Fanconi anemia complex by associating with E3 ubiquitin-protein ligase FANCL and catalyzing monoubiquitination of FANCD2, a key step in the DNA damage pathway. In vitro catalyzes 'Lys-11'-linked polyubiquitination. UBE2W-catalyzed ubiquitination also occurs in the presence of inactive RING/U-box type E3s, i.e. lacking the active site cysteine residues to form thioester bonds with ubiquitin, or even in the absence of E3, albeit at a slower rate. The sequence is that of Ubiquitin-conjugating enzyme E2 W (UBE2W) from Bos taurus (Bovine).